Consider the following 699-residue polypeptide: Polyribonucleotide nucleotidyltransferase (699 aa).

Mg(2+) is bound by residues Asp-485 and Asp-491. Residues 552 to 611 (PRITTIKINPEKIRDVIGKGGAVIRALTEETGTTIELEDDGTVRIASSNGEATKEAIRRI) enclose the KH domain. The S1 motif domain maps to 621–689 (GRIYNGKVIR…RQGRVRLSIK (69 aa)).

The protein belongs to the polyribonucleotide nucleotidyltransferase family. As to quaternary structure, component of the RNA degradosome, which is a multiprotein complex involved in RNA processing and mRNA degradation. Mg(2+) serves as cofactor.

It localises to the cytoplasm. The enzyme catalyses RNA(n+1) + phosphate = RNA(n) + a ribonucleoside 5'-diphosphate. Functionally, involved in mRNA degradation. Catalyzes the phosphorolysis of single-stranded polyribonucleotides processively in the 3'- to 5'-direction. The protein is Polyribonucleotide nucleotidyltransferase of Shewanella sp. (strain W3-18-1).